We begin with the raw amino-acid sequence, 355 residues long: Galactoside 2-alpha-L-fucosyltransferase (355 aa).

Over 1-15 (MRNVKGLFSYMTKTK) the chain is Cytoplasmic. Residues 16–36 (SFYISIIVIIFIIFIVNRMGP) form a helical; Signal-anchor for type II membrane protein membrane-spanning segment. Topologically, residues 37-355 (RNYNYKQIGT…MSRNGSIISK (319 aa)) are lumenal. 3 N-linked (GlcNAc...) asparagine glycosylation sites follow: asparagine 92, asparagine 311, and asparagine 349.

Belongs to the glycosyltransferase 11 family. As to expression, expression is restricted to the 20 intestinal cells in larvae and adult.

The protein localises to the golgi apparatus. The protein resides in the golgi stack membrane. It participates in protein modification; protein glycosylation. Its function is as follows. Selectively catalyzes the addition of fucose in alpha 1-2 linkage to Gal-beta-(1-&gt;4)-Xyl-beta-R, Gal-beta-(1-&gt;6)-GlcNAc-R, Gal-beta-(1-&gt;3)-Gal-beta-(1-&gt;4)-Glc and Gal-beta-(1-&gt;3)-Gal-beta-(1-&gt;4)-Xyl-R acceptors but not Gal-beta-(1-&gt;3)-GlcNAc-beta-(1-&gt;3)-Gal-beta-(1-&gt;4)-Glc. Unlike in mammals, unable to fucosylate Gal-beta-(1-&gt;4)-Glc-beta-R. This chain is Galactoside 2-alpha-L-fucosyltransferase, found in Caenorhabditis elegans.